We begin with the raw amino-acid sequence, 352 residues long: Ferrochelatase (352 aa).

The Fe cation site is built by His-222 and Glu-303.

This sequence belongs to the ferrochelatase family.

It is found in the cytoplasm. It catalyses the reaction heme b + 2 H(+) = protoporphyrin IX + Fe(2+). It functions in the pathway porphyrin-containing compound metabolism; protoheme biosynthesis; protoheme from protoporphyrin-IX: step 1/1. Its function is as follows. Catalyzes the ferrous insertion into protoporphyrin IX. This is Ferrochelatase from Brucella melitensis biotype 2 (strain ATCC 23457).